The sequence spans 342 residues: Photosystem II D2 protein (342 aa).

Residues 1–29 are Cytoplasmic-facing; sequence ERGWFDILDDWLKRDRFVFVGWSGILLFP. A helical transmembrane segment spans residues 30–50; it reads CAYLALGGWLTGTTFVTSWYT. Residues 51–113 are Lumenal-facing; sequence HGLASSYLEG…IALHGAFGLI (63 aa). Histidine 107 serves as a coordination point for chlorophyll a. A helical membrane pass occupies residues 114–130; that stretch reads GFMLRQFEIARLVGVRP. Residues glutamine 119 and asparagine 132 each coordinate pheophytin a. The Cytoplasmic segment spans residues 131–141; that stretch reads YNAIAFSAPIA. Residues 142–155 form a helical membrane-spanning segment; the sequence is VFVSVFLIYPLGQS. Residues 156–196 lie on the Lumenal side of the membrane; it reads SWFFAPSFGVAAIFRFLLFFQGFHNWTLNPFHMMGVAGVLG. Histidine 187 provides a ligand contact to chlorophyll a. A helical transmembrane segment spans residues 197-217; it reads GALLCAIHGATVENTLFQDGE. Residues histidine 204 and phenylalanine 251 each contribute to the a plastoquinone site. Histidine 204 contributes to the Fe cation binding site. Over 218-267 the chain is Cytoplasmic; the sequence is GASTFRAFNPTQAEETYSMVTANRFWSQIFGIAFSNKRWLHFFMLFVPVT. Histidine 258 lines the Fe cation pocket. A helical transmembrane segment spans residues 268-284; the sequence is GLWMSAIGVVGLALNLR. The Lumenal portion of the chain corresponds to 285-342; the sequence is SYDFISQEIRAAEDPEFETFYTKNLLLNEGIRAWMAPQDQPHENFVFPEEVLPRGNAL.

This sequence belongs to the reaction center PufL/M/PsbA/D family. As to quaternary structure, PSII is composed of 1 copy each of membrane proteins PsbA, PsbB, PsbC, PsbD, PsbE, PsbF, PsbH, PsbI, PsbJ, PsbK, PsbL, PsbM, PsbT, PsbX, PsbY, PsbZ, Psb30/Ycf12, peripheral proteins PsbO, CyanoQ (PsbQ), PsbU, PsbV and a large number of cofactors. It forms dimeric complexes. It depends on The D1/D2 heterodimer binds P680, chlorophylls that are the primary electron donor of PSII, and subsequent electron acceptors. It shares a non-heme iron and each subunit binds pheophytin, quinone, additional chlorophylls, carotenoids and lipids. There is also a Cl(-1) ion associated with D1 and D2, which is required for oxygen evolution. The PSII complex binds additional chlorophylls, carotenoids and specific lipids. as a cofactor.

The protein localises to the cellular thylakoid membrane. The enzyme catalyses 2 a plastoquinone + 4 hnu + 2 H2O = 2 a plastoquinol + O2. Functionally, photosystem II (PSII) is a light-driven water:plastoquinone oxidoreductase that uses light energy to abstract electrons from H(2)O, generating O(2) and a proton gradient subsequently used for ATP formation. It consists of a core antenna complex that captures photons, and an electron transfer chain that converts photonic excitation into a charge separation. The D1/D2 (PsbA/PsbD) reaction center heterodimer binds P680, the primary electron donor of PSII as well as several subsequent electron acceptors. D2 is needed for assembly of a stable PSII complex. In Thermostichus vulcanus (Synechococcus vulcanus), this protein is Photosystem II D2 protein.